A 433-amino-acid chain; its full sequence is D-amino acid dehydrogenase (433 aa).

3 to 17 provides a ligand contact to FAD; that stretch reads VLVLGSGVIGTTSAY.

It belongs to the DadA oxidoreductase family. Requires FAD as cofactor.

It carries out the reaction a D-alpha-amino acid + A + H2O = a 2-oxocarboxylate + AH2 + NH4(+). It participates in amino-acid degradation; D-alanine degradation; NH(3) and pyruvate from D-alanine: step 1/1. Its function is as follows. Oxidative deamination of D-amino acids. The protein is D-amino acid dehydrogenase of Pseudomonas syringae pv. syringae (strain B728a).